The primary structure comprises 241 residues: Probable transcriptional regulatory protein Maqu_2154 (241 aa).

The protein belongs to the TACO1 family.

The protein localises to the cytoplasm. The chain is Probable transcriptional regulatory protein Maqu_2154 from Marinobacter nauticus (strain ATCC 700491 / DSM 11845 / VT8) (Marinobacter aquaeolei).